Here is a 423-residue protein sequence, read N- to C-terminus: Imidazolonepropionase (423 aa).

Residues histidine 91 and histidine 93 each contribute to the Fe(3+) site. Residues histidine 91 and histidine 93 each coordinate Zn(2+). The 4-imidazolone-5-propanoate site is built by arginine 100, tyrosine 163, and histidine 193. Tyrosine 163 serves as a coordination point for N-formimidoyl-L-glutamate. Residue histidine 257 participates in Fe(3+) binding. Histidine 257 is a binding site for Zn(2+). Glutamine 260 provides a ligand contact to 4-imidazolone-5-propanoate. Residue aspartate 331 coordinates Fe(3+). Aspartate 331 provides a ligand contact to Zn(2+). Residues asparagine 333 and glycine 335 each coordinate N-formimidoyl-L-glutamate. Threonine 336 lines the 4-imidazolone-5-propanoate pocket.

It belongs to the metallo-dependent hydrolases superfamily. HutI family. It depends on Zn(2+) as a cofactor. Fe(3+) serves as cofactor.

Its subcellular location is the cytoplasm. The catalysed reaction is 4-imidazolone-5-propanoate + H2O = N-formimidoyl-L-glutamate. The protein operates within amino-acid degradation; L-histidine degradation into L-glutamate; N-formimidoyl-L-glutamate from L-histidine: step 3/3. Its function is as follows. Catalyzes the hydrolytic cleavage of the carbon-nitrogen bond in imidazolone-5-propanoate to yield N-formimidoyl-L-glutamate. It is the third step in the universal histidine degradation pathway. The protein is Imidazolonepropionase of Bdellovibrio bacteriovorus (strain ATCC 15356 / DSM 50701 / NCIMB 9529 / HD100).